We begin with the raw amino-acid sequence, 355 residues long: Methylthioribose-1-phosphate isomerase (355 aa).

Substrate contacts are provided by residues 52–54 (RGA), R95, and Q204. The active-site Proton donor is D245. A substrate-binding site is contributed by 255-256 (NK).

The protein belongs to the eIF-2B alpha/beta/delta subunits family. MtnA subfamily.

The enzyme catalyses 5-(methylsulfanyl)-alpha-D-ribose 1-phosphate = 5-(methylsulfanyl)-D-ribulose 1-phosphate. Its pathway is amino-acid biosynthesis; L-methionine biosynthesis via salvage pathway; L-methionine from S-methyl-5-thio-alpha-D-ribose 1-phosphate: step 1/6. Functionally, catalyzes the interconversion of methylthioribose-1-phosphate (MTR-1-P) into methylthioribulose-1-phosphate (MTRu-1-P). This Acaryochloris marina (strain MBIC 11017) protein is Methylthioribose-1-phosphate isomerase.